The sequence spans 315 residues: tRNA-dihydrouridine(16) synthase (315 aa).

FMN contacts are provided by residues 7–9 (PME) and Q68. C98 functions as the Proton donor in the catalytic mechanism. FMN-binding positions include K139, 199–201 (NGE), and 223–224 (GR).

This sequence belongs to the Dus family. DusC subfamily. FMN is required as a cofactor.

It carries out the reaction 5,6-dihydrouridine(16) in tRNA + NADP(+) = uridine(16) in tRNA + NADPH + H(+). The enzyme catalyses 5,6-dihydrouridine(16) in tRNA + NAD(+) = uridine(16) in tRNA + NADH + H(+). Catalyzes the synthesis of 5,6-dihydrouridine (D), a modified base found in the D-loop of most tRNAs, via the reduction of the C5-C6 double bond in target uridines. Specifically modifies U16 in tRNAs. The chain is tRNA-dihydrouridine(16) synthase from Shewanella oneidensis (strain ATCC 700550 / JCM 31522 / CIP 106686 / LMG 19005 / NCIMB 14063 / MR-1).